The primary structure comprises 159 residues: Cell number regulator 4 (159 aa).

The chain crosses the membrane as a helical span at residues 52 to 74 (LAGLLYCLLLHAGVAVVPCHCIY).

Belongs to the cornifelin family. Expressed in roots, coleoptiles, leaves, stalks, apical meristems, immature ears, endosperm, pericarp and tassel spikelets.

It is found in the membrane. The polypeptide is Cell number regulator 4 (CNR4) (Zea mays (Maize)).